The primary structure comprises 276 residues: Formamidopyrimidine-DNA glycosylase (276 aa).

The active-site Schiff-base intermediate with DNA is the Pro-2. Glu-3 functions as the Proton donor in the catalytic mechanism. Residue Lys-58 is the Proton donor; for beta-elimination activity of the active site. Residues His-94, Arg-112, and Arg-157 each contribute to the DNA site. The FPG-type zinc-finger motif lies at Phe-242–Arg-276. Arg-266 (proton donor; for delta-elimination activity) is an active-site residue.

This sequence belongs to the FPG family. As to quaternary structure, monomer. It depends on Zn(2+) as a cofactor.

The enzyme catalyses Hydrolysis of DNA containing ring-opened 7-methylguanine residues, releasing 2,6-diamino-4-hydroxy-5-(N-methyl)formamidopyrimidine.. The catalysed reaction is 2'-deoxyribonucleotide-(2'-deoxyribose 5'-phosphate)-2'-deoxyribonucleotide-DNA = a 3'-end 2'-deoxyribonucleotide-(2,3-dehydro-2,3-deoxyribose 5'-phosphate)-DNA + a 5'-end 5'-phospho-2'-deoxyribonucleoside-DNA + H(+). In terms of biological role, involved in base excision repair of DNA damaged by oxidation or by mutagenic agents. Acts as a DNA glycosylase that recognizes and removes damaged bases. Has a preference for oxidized purines, such as 7,8-dihydro-8-oxoguanine (8-oxoG). Has AP (apurinic/apyrimidinic) lyase activity and introduces nicks in the DNA strand. Cleaves the DNA backbone by beta-delta elimination to generate a single-strand break at the site of the removed base with both 3'- and 5'-phosphates. The protein is Formamidopyrimidine-DNA glycosylase of Paraburkholderia phymatum (strain DSM 17167 / CIP 108236 / LMG 21445 / STM815) (Burkholderia phymatum).